The sequence spans 341 residues: Uroporphyrinogen decarboxylase (341 aa).

Residues 26 to 30 (RQAGR), aspartate 75, tyrosine 150, serine 205, and histidine 318 each bind substrate.

The protein belongs to the uroporphyrinogen decarboxylase family. As to quaternary structure, homodimer.

The protein resides in the cytoplasm. It catalyses the reaction uroporphyrinogen III + 4 H(+) = coproporphyrinogen III + 4 CO2. Its pathway is porphyrin-containing compound metabolism; protoporphyrin-IX biosynthesis; coproporphyrinogen-III from 5-aminolevulinate: step 4/4. Catalyzes the decarboxylation of four acetate groups of uroporphyrinogen-III to yield coproporphyrinogen-III. This Thermus thermophilus (strain ATCC BAA-163 / DSM 7039 / HB27) protein is Uroporphyrinogen decarboxylase.